The chain runs to 809 residues: PiggyBac transposable element-derived protein 1 (809 aa).

The SCAN box domain occupies 44–126; sequence RLRFRHFCYQ…TVLENLETGS (83 aa). The tract at residues 170–199 is disordered; the sequence is CEPPQRPQGNPQEVSGPVPHGSAHLQEKNP. A Glycyl lysine isopeptide (Lys-Gly) (interchain with G-Cter in SUMO2) cross-link involves residue K218. The tract at residues 271-297 is disordered; that stretch reads KQETSEEMEQSGEASGKPNRECAPQIP. S360 is modified (phosphoserine).

In Homo sapiens (Human), this protein is PiggyBac transposable element-derived protein 1 (PGBD1).